The following is a 159-amino-acid chain: Nucleotide-binding protein PLES_47741 (159 aa).

Belongs to the YajQ family.

Nucleotide-binding protein. This is Nucleotide-binding protein PLES_47741 from Pseudomonas aeruginosa (strain LESB58).